Here is a 331-residue protein sequence, read N- to C-terminus: Phosphoribosylformylglycinamidine cyclo-ligase (331 aa).

Belongs to the AIR synthase family.

Its subcellular location is the cytoplasm. The enzyme catalyses 2-formamido-N(1)-(5-O-phospho-beta-D-ribosyl)acetamidine + ATP = 5-amino-1-(5-phospho-beta-D-ribosyl)imidazole + ADP + phosphate + H(+). It participates in purine metabolism; IMP biosynthesis via de novo pathway; 5-amino-1-(5-phospho-D-ribosyl)imidazole from N(2)-formyl-N(1)-(5-phospho-D-ribosyl)glycinamide: step 2/2. The protein is Phosphoribosylformylglycinamidine cyclo-ligase of Clostridium botulinum (strain 657 / Type Ba4).